The primary structure comprises 396 residues: Elongation factor Tu 1 (396 aa).

Residues lysine 10–glutamate 206 form the tr-type G domain. Residues glycine 19 to threonine 26 are G1. GTP is bound at residue glycine 19 to threonine 26. Threonine 26 contacts Mg(2+). The tract at residues glycine 60–alanine 64 is G2. Residues aspartate 81–glycine 84 form a G3 region. Residues aspartate 81 to histidine 85 and asparagine 136 to aspartate 139 contribute to the GTP site. Residues asparagine 136–aspartate 139 are G4. The G5 stretch occupies residues serine 174–leucine 176.

This sequence belongs to the TRAFAC class translation factor GTPase superfamily. Classic translation factor GTPase family. EF-Tu/EF-1A subfamily. As to quaternary structure, monomer.

The protein localises to the cytoplasm. It carries out the reaction GTP + H2O = GDP + phosphate + H(+). Functionally, GTP hydrolase that promotes the GTP-dependent binding of aminoacyl-tRNA to the A-site of ribosomes during protein biosynthesis. This Halorhodospira halophila (strain DSM 244 / SL1) (Ectothiorhodospira halophila (strain DSM 244 / SL1)) protein is Elongation factor Tu 1.